The primary structure comprises 603 residues: MDRKRSFEKIVVSVMVGKNVQKFLTFVEDEPDFQGGPIPSKYLIPKKINLMVYTLFQVHTLKFNRKDYDTLSLFYLNRGYYNELSFRVLERCYEIASARPNDSSTMRTFTDFVSGTPIVRSLQKSTIRKYGYNLAPYMFLLLHVDELSIFSAYQASLPGEKKVDTERLKRDLCPRKPTEIKYFSQICNDMMNKKDRLGDVLATAQRIRRRYNKNGSSEPRLKTLDGLTSERWIQWLGLESDYHCSFSSTRNAEDVVAGEAASSDHDQKISRVTRKRPREPKSTNDILVAGRKLFGSSFEFRDLHQLRLCHEIYMADTPSVAVQAPPGYGKTELFHLPLIALASKGDVKYVSFLFVPYTVLLANCMIRLGRRGCLNVAPVRNFIEEGCDGVTDLYVGIYDDLASTNFTDRIAAWENIVECTFRTNNVKLGYLIVDEFHNFETEVYRQSQFGGITNLDFDAFEKAIFLSGTAPEAVADAALQRIGLTGLAKKSMDINELKRSEDLSRGLSSYPTRMFNLIKEKSEVPLGHVHKIWKKVESQPEEALKLLLALFEIEPESKAIVVASTTNEVEELACSWRKYFRVVWIHGKLGCCRKGVSHKGVCH.

A disordered region spans residues 257 to 281 (AGEAASSDHDQKISRVTRKRPREPK).

This is an uncharacterized protein from Saccharomyces cerevisiae (strain ATCC 204508 / S288c) (Baker's yeast).